A 360-amino-acid polypeptide reads, in one-letter code: Peptide chain release factor 1 (360 aa).

The residue at position 236 (glutamine 236) is an N5-methylglutamine. The disordered stretch occupies residues 288 to 308; that stretch reads QDEQDAERKSTIGTGDRSERI. Over residues 293-308 the composition is skewed to basic and acidic residues; sequence AERKSTIGTGDRSERI.

It belongs to the prokaryotic/mitochondrial release factor family. In terms of processing, methylated by PrmC. Methylation increases the termination efficiency of RF1.

It is found in the cytoplasm. Functionally, peptide chain release factor 1 directs the termination of translation in response to the peptide chain termination codons UAG and UAA. The chain is Peptide chain release factor 1 from Streptococcus equi subsp. zooepidemicus (strain H70).